Reading from the N-terminus, the 898-residue chain is Methionine--tRNA ligase, cytoplasmic (898 aa).

The region spanning 74–198 (GWEQDDLTNQ…VLKQQGVLAL (125 aa)) is the GST C-terminal domain. Residues 273-283 (PYVNNVPHLGN) carry the 'HIGH' region motif. A 'KMSKS' region motif is present at residues 593 to 597 (KFSKS). K596 lines the ATP pocket. S825 is subject to Phosphoserine. T833 carries the post-translational modification Phosphothreonine. The region spanning 839 to 895 (QIQALTEEVTKQGNIVRELKAQKADKNQIAAEVAKLLDLKKQLALAEGKPLETSKGK) is the WHEP-TRS domain.

The protein belongs to the class-I aminoacyl-tRNA synthetase family. As to quaternary structure, monomer. Part of a multisubunit complex that groups tRNA ligases for Arg (RARS1), Asp (DARS1), Gln (QARS1), Ile (IARS1), Leu (LARS1), Lys (KARS1), Met (MARS1) the bifunctional ligase for Glu and Pro (EPRS1) and the auxiliary subunits AIMP1/p43, AIMP2/p38 and EEF1E1/p18. Forms a linear complex that contains MARS1, EEF1E1, EPRS1 and AIMP2 that is at the core of the multisubunit complex.

The protein localises to the cytoplasm. Its subcellular location is the cytosol. It is found in the nucleus. It localises to the nucleolus. It catalyses the reaction tRNA(Met) + L-methionine + ATP = L-methionyl-tRNA(Met) + AMP + diphosphate. Functionally, catalyzes the specific attachment of an amino acid to its cognate tRNA in a 2 step reaction: the amino acid (AA) is first activated by ATP to form AA-AMP and then transferred to the acceptor end of the tRNA. Plays a role in the synthesis of ribosomal RNA in the nucleolus. This is Methionine--tRNA ligase, cytoplasmic (MARS1) from Bos taurus (Bovine).